Consider the following 443-residue polypeptide: Xaa-Pro dipeptidase (443 aa).

Positions 246, 257, 339, 384, and 423 each coordinate Mn(2+).

The protein belongs to the peptidase M24B family. Bacterial-type prolidase subfamily. Mn(2+) is required as a cofactor.

The catalysed reaction is Xaa-L-Pro dipeptide + H2O = an L-alpha-amino acid + L-proline. Functionally, splits dipeptides with a prolyl residue in the C-terminal position. This is Xaa-Pro dipeptidase from Pectobacterium carotovorum subsp. carotovorum (strain PC1).